Reading from the N-terminus, the 548-residue chain is Chaperonin GroEL (548 aa).

Residues threonine 29–proline 32, lysine 50, aspartate 86–threonine 90, glycine 414, asparagine 478–alanine 480, and aspartate 494 each bind ATP.

It belongs to the chaperonin (HSP60) family. In terms of assembly, forms a cylinder of 14 subunits composed of two heptameric rings stacked back-to-back. Interacts with the co-chaperonin GroES.

It is found in the cytoplasm. The catalysed reaction is ATP + H2O + a folded polypeptide = ADP + phosphate + an unfolded polypeptide.. Its function is as follows. Together with its co-chaperonin GroES, plays an essential role in assisting protein folding. The GroEL-GroES system forms a nano-cage that allows encapsulation of the non-native substrate proteins and provides a physical environment optimized to promote and accelerate protein folding. May play a protective role against the defense mechanisms generated by the infected macrophages. The protein is Chaperonin GroEL of Legionella pneumophila.